Consider the following 657-residue polypeptide: Glycogen debranching enzyme (657 aa).

Asp-334 (nucleophile) is an active-site residue. Glu-369 serves as the catalytic Proton donor. The disordered stretch occupies residues 458-485 (ANGEQNRDGTNSNFSFNHGTEGLEADET). A compositionally biased stretch (polar residues) spans 465–475 (DGTNSNFSFNH).

It belongs to the glycosyl hydrolase 13 family.

It is found in the cytoplasm. The enzyme catalyses Hydrolysis of (1-&gt;6)-alpha-D-glucosidic linkages to branches with degrees of polymerization of three or four glucose residues in limit dextrin.. The protein operates within glycan degradation; glycogen degradation. With respect to regulation, slightly activated by Ca(2+). Inhibited by divalent cations such as Zn(2+), Cu(2+), Fe(2+), Mg(2+), Mn(2+), but only slightly inhibited by EDTA. In terms of biological role, removes maltotriose and maltotetraose chains that are attached by 1,6-alpha-linkage to the limit dextrin main chain, generating a debranched limit dextrin. Hydrolyzes the alpha-1,6-glycosidic linkages in amylopectin while does not hydrolyze the alpha-1,4-glycosidic linkages in amylose. Native glycogen is a poor substrate. The protein is Glycogen debranching enzyme of Dickeya chrysanthemi (Pectobacterium chrysanthemi).